We begin with the raw amino-acid sequence, 102 residues long: NADH-quinone oxidoreductase subunit K 1 (102 aa).

The next 3 membrane-spanning stretches (helical) occupy residues 5–25 (LYEVLILASILFAMGLACVVA), 30–50 (VIMMLIGIEIMLNAVMLTFVG), and 62–82 (VFSLMIMALTSAEVSLALAMV).

It belongs to the complex I subunit 4L family. As to quaternary structure, NDH-1 is composed of 14 different subunits. Subunits NuoA, H, J, K, L, M, N constitute the membrane sector of the complex.

It is found in the cell inner membrane. The enzyme catalyses a quinone + NADH + 5 H(+)(in) = a quinol + NAD(+) + 4 H(+)(out). NDH-1 shuttles electrons from NADH, via FMN and iron-sulfur (Fe-S) centers, to quinones in the respiratory chain. The immediate electron acceptor for the enzyme in this species is believed to be ubiquinone. Couples the redox reaction to proton translocation (for every two electrons transferred, four hydrogen ions are translocated across the cytoplasmic membrane), and thus conserves the redox energy in a proton gradient. This Citrifermentans bemidjiense (strain ATCC BAA-1014 / DSM 16622 / JCM 12645 / Bem) (Geobacter bemidjiensis) protein is NADH-quinone oxidoreductase subunit K 1.